We begin with the raw amino-acid sequence, 241 residues long: Uridylate kinase (241 aa).

An ATP-binding site is contributed by 12-15 (KISG). The tract at residues 20-25 (GDKGNG) is involved in allosteric activation by GTP. Gly54 lines the UMP pocket. ATP-binding residues include Gly55 and Arg59. UMP-binding positions include Asp74 and 135–142 (TGNPYFST). ATP is bound by residues Asn163, Tyr169, and Asp172.

The protein belongs to the UMP kinase family. Homohexamer.

The protein resides in the cytoplasm. The enzyme catalyses UMP + ATP = UDP + ADP. The protein operates within pyrimidine metabolism; CTP biosynthesis via de novo pathway; UDP from UMP (UMPK route): step 1/1. Its activity is regulated as follows. Allosterically activated by GTP. Inhibited by UTP. Functionally, catalyzes the reversible phosphorylation of UMP to UDP. In Lactobacillus acidophilus (strain ATCC 700396 / NCK56 / N2 / NCFM), this protein is Uridylate kinase.